The primary structure comprises 138 residues: uncharacterized protein (138 aa).

A disordered region spans residues 1-27 (MEGELIENNGLDIYDTSETPKKRGRPA).

This is an uncharacterized protein from Escherichia coli (strain K12).